Consider the following 114-residue polypeptide: Nascent polypeptide-associated complex protein (114 aa).

Residues 5 to 69 form the NAC-A/B domain; it reads PSQFKNLERM…AKEAQKEEPK (65 aa).

Belongs to the NAC-alpha family. As to quaternary structure, homodimer. Interacts with the ribosome. Binds ribosomal RNA.

Functionally, contacts the emerging nascent chain on the ribosome. The chain is Nascent polypeptide-associated complex protein from Sulfurisphaera tokodaii (strain DSM 16993 / JCM 10545 / NBRC 100140 / 7) (Sulfolobus tokodaii).